We begin with the raw amino-acid sequence, 83 residues long: Short neurotoxin OKI-01/OKI-19 (83 aa).

Residues 1 to 21 (MKTLLLTLVVVTIVCLDLGYT) form the signal peptide. Cystine bridges form between C24–C45, C38–C62, C64–C75, and C76–C81.

Belongs to the three-finger toxin family. Short-chain subfamily. Type I alpha-neurotoxin sub-subfamily. In terms of tissue distribution, expressed by the venom gland.

It is found in the secreted. In terms of biological role, binds to muscle nicotinic acetylcholine receptor (nAChR) and inhibit acetylcholine from binding to the receptor, thereby impairing neuromuscular transmission. The polypeptide is Short neurotoxin OKI-01/OKI-19 (Laticauda laticaudata (Blue-ringed sea krait)).